The chain runs to 469 residues: 6-phospho-beta-galactosidase (469 aa).

Residues Q19, H116, N159, E160, and N297 each contribute to the D-galactose 6-phosphate site. The active-site Proton donor is E160. The active-site Nucleophile is E375. Positions 428, 429, 435, and 437 each coordinate D-galactose 6-phosphate.

The protein belongs to the glycosyl hydrolase 1 family.

It carries out the reaction a 6-phospho-beta-D-galactoside + H2O = D-galactose 6-phosphate + an alcohol. The protein operates within carbohydrate metabolism; lactose degradation; D-galactose 6-phosphate and beta-D-glucose from lactose 6-phosphate: step 1/1. In Streptococcus equi subsp. zooepidemicus (strain H70), this protein is 6-phospho-beta-galactosidase.